The following is an 807-amino-acid chain: Putative transmembrane protein ORF807 (807 aa).

Transmembrane regions (helical) follow at residues 210–230, 234–254, 270–290, 459–479, and 657–677; these read VLMLICLLIYAGCYASYSDIL, GLSTVGAGVNAKVPVTAIVYF, VTIQLYALIWVGISTTNFVIL, ILIGVGAVALIVIGTVALVLT, and VALLSAIASILVNMFLFMPLV.

Its subcellular location is the host membrane. This Acidianus filamentous virus 1 (isolate United States/Yellowstone) (AFV-1) protein is Putative transmembrane protein ORF807.